We begin with the raw amino-acid sequence, 5762 residues long: Mucin-5B (5762 aa).

Residues 1–25 (MGAPSACRTLVLALAAMLVVPQAET) form the signal peptide. Residues 27–50 (GPVEPSWENAGHTMDGGAPTSSPT) form a disordered region. The region spanning 75–245 (RVCSTWGDFH…KLDGPTEQCP (171 aa)) is the VWFD 1 domain. 2 disulfides stabilise this stretch: C77-C207 and C99-C244. N145 is a glycosylation site (N-linked (GlcNAc...) asparagine). Residue E194 coordinates Cu(2+). 2 N-linked (GlcNAc...) asparagine glycosylation sites follow: N201 and N254. Cu(2+) is bound by residues H311 and H358. In terms of domain architecture, TIL 1 spans 329–385 (CPLNMQHQECGSPCTDTCSNPQRAQLCEDHCVDGCFCPPGTVLDDITHSGCLPLGQC). N401 is a glycosylation site (N-linked (GlcNAc...) asparagine). One can recognise a VWFD 2 domain in the interval 423 to 598 (GTCSVQGGAH…NTWKAQAACA (176 aa)). Disulfide bonds link C425/C562, C447/C597, and C469/C477. N-linked (GlcNAc...) asparagine glycosylation occurs at N515. 2 TIL domains span residues 695–752 (CPKS…AQEC) and 805–855 (NSSA…EEDC). N805 carries an N-linked (GlcNAc...) asparagine glycan. Residues 855-927 (CPCVHNEATY…EYILAQDYCG (73 aa)) form the VWFC 1 domain. Residues 893-1062 (GTCVAYGDGH…NSWKLSPSCP (170 aa)) form the VWFD 3 domain. Cystine bridges form between C895–C1026, C917–C1061, C926–C1023, and C944–C951. N-linked (GlcNAc...) asparagine glycosylation is present at N929. N-linked (GlcNAc...) asparagine glycosylation is found at N1276 and N1292. The Cys-rich subdomain 1 repeat unit spans residues 1333 to 1432 (CVREVCRWSS…RVLCCEYVPC (100 aa)). The tract at residues 1333-4228 (CVREVCRWSS…RVFCCNYGHC (2896 aa)) is 7 X Cys-rich subdomain repeats. A glycan (C-linked (Man) tryptophan) is linked at W1340. Disordered stretches follow at residues 1437–1462 (APGT…QTTA) and 1480–1502 (LTSQ…GTTT). Residues 1450 to 1462 (TEPAVPTPTQTTA) show a composition bias toward low complexity. One copy of the Cys-rich subdomain 2 repeat lies at 1503 to 1604 (CQPRCQWTEW…VLCCSDDHCR (102 aa)). W1509 carries C-linked (Man) tryptophan glycosylation. N1556 carries an N-linked (GlcNAc...) asparagine glycan. The disordered stretch occupies residues 1607–1783 (ATTPPPTTEL…NTTTSQGTTR (177 aa)). Positions 1614–1624 (TELETATTTTT) are enriched in low complexity. Polar residues-rich tracts occupy residues 1625–1638 (QALF…SSPG) and 1645–1662 (ASTT…SPRY). A compositionally biased stretch (low complexity) spans 1663-1684 (TSTLGTATTGGPTTPAGSTEPT). Polar residues predominate over residues 1689–1706 (ATSTLPTRSALPGTTGSL). 2 stretches are compositionally biased toward low complexity: residues 1739 to 1756 (EPLT…LSTS) and 1765 to 1777 (TETT…NTTT). A glycan (N-linked (GlcNAc...) asparagine) is linked at N1774. A Cys-rich subdomain 3 repeat occupies 1784–1885 (CQPKCEWTEW…VLCCDDYSHC (102 aa)). Residue W1790 is glycosylated (C-linked (Man) tryptophan). The span at 1890–1987 (ATSSTATPSS…TSVTPIPSSS (98 aa)) shows a compositional bias: low complexity. Disordered stretches follow at residues 1890-2019 (ATSS…TAHT), 2031-2100 (GATG…GTTH), 2114-2211 (TGSM…HTVR), and 2242-2302 (TGTT…SSPT). An 11 X approximate tandem repeats, Ser/Thr-rich region spans residues 1890 to 2199 (ATSSTATPSS…VPNTMATTHG (310 aa)). Over residues 1988–1997 (LGTTWTRLSQ) the composition is skewed to polar residues. The span at 1998-2019 (TTTPTATMSTATPSSTPETAHT) shows a compositional bias: low complexity. Positions 2114 to 2181 (TGSMATPSSS…TSNTVTPSSA (68 aa)) are enriched in low complexity. A compositionally biased stretch (polar residues) spans 2182-2199 (LGTTHTPPVPNTMATTHG). The Cys-rich subdomain 4 repeat unit spans residues 2313–2414 (GCEPQCAWSE…RVFCCNYGHC (102 aa)). A glycan (C-linked (Man) tryptophan) is linked at W2320. The segment at 2419 to 2756 (ATSSTAMPSS…VPNTTATTHG (338 aa)) is 11 X approximate tandem repeats, Ser/Thr-rich. Disordered stretches follow at residues 2443-2462 (ATTT…PGTT), 2473-2522 (TVTV…ATAL), and 2556-2861 (TTPT…PTSA). The segment covering 2556 to 2738 (TTPTATMSTA…TSSTVTPSSA (183 aa)) has biased composition (low complexity). The segment covering 2739–2786 (LGTTHTPPVPNTTATTHGRSLSPSSPHTVRTAWTSATSGTLGTTHITE) has biased composition (polar residues). Residue N2749 is glycosylated (N-linked (GlcNAc...) asparagine). Low complexity predominate over residues 2787 to 2861 (PSTGTSHTPA…TLLPSSPTSA (75 aa)). The HAT 1 repeat unit spans residues 2854–2886 (LPSSPTSAPITTVVTMGCEPQCAWSEWLDYSYP). One copy of the Cys-rich subdomain 5 repeat lies at 2871 to 2971 (CEPQCAWSEW…RVFCCNYGHC (101 aa)). The C-linked (Man) tryptophan glycan is linked to W2877. The 17 X approximate tandem repeats, Ser/Thr-rich stretch occupies residues 2976 to 3456 (ATSSTATPSS…VPNTTATTHG (481 aa)). Composition is skewed to low complexity over residues 3001–3017 (TTTA…STPG) and 3026–3049 (TSTA…RTAT). Disordered stretches follow at residues 3001 to 3049 (TTTA…RTAT), 3256 to 3357 (TTPT…GTTH), 3371 to 3469 (TGSM…TVRT), and 3481 to 3561 (TTHI…PTSA). Positions 3371–3438 (TGSMATPSSS…TSSTVTPSSA (68 aa)) are enriched in low complexity. Polar residues predominate over residues 3439–3456 (LGTTHTPPVPNTTATTHG). The N-linked (GlcNAc...) asparagine glycan is linked to N3449. Over residues 3487–3561 (PSTVTSHTPA…TLLPSSPTSA (75 aa)) the composition is skewed to low complexity. The stretch at 3554-3586 (LPSSPTSAPITTVVTTGCEPQCAWSEWLDYSYP) is one HAT 2 repeat. The stretch at 3571 to 3671 (CEPQCAWSEW…RVFCCNYGHC (101 aa)) is one Cys-rich subdomain 6 repeat. A glycan (C-linked (Man) tryptophan) is linked at W3577. Residues 3676-4013 (ATSSTATPSS…VPNTTATTHG (338 aa)) form an 11 X approximate tandem repeats, Ser/Thr-rich region. 3 disordered regions span residues 3699 to 3779 (TATT…ATAL), 3813 to 3917 (TTPT…HTPT), and 3956 to 4118 (ATGS…PTSA). A compositionally biased stretch (low complexity) spans 3956 to 3995 (ATGSTTNPSSTPGTTPIPPVLTTTATTPAATSSTVTPSSA). A compositionally biased stretch (polar residues) spans 3996-4043 (LGTTHTPPVPNTTATTHGRSLSPSSPHTVRTAWTSATSGTLGTTHITE). A glycan (N-linked (GlcNAc...) asparagine) is linked at N4006. The segment covering 4044 to 4118 (PSTGTSHTPA…TLLPSSPTSA (75 aa)) has biased composition (low complexity). Residues 4111–4143 (LPSSPTSAPITTVVTTGCEPQCAWSEWLDYSYP) form an HAT 3 repeat. One copy of the Cys-rich subdomain 7 repeat lies at 4128-4228 (CEPQCAWSEW…RVFCCNYGHC (101 aa)). W4134 carries C-linked (Man) tryptophan glycosylation. The tract at residues 4233 to 4879 (ATSSTAMPSS…TLGTAHTPKV (647 aa)) is 23 X approximate tandem repeats, Ser/Thr-rich. 2 stretches are compositionally biased toward low complexity: residues 4259-4274 (TTAS…STPG) and 4283-4389 (TSPA…PGTT). Disordered regions lie at residues 4259–4389 (TTAS…PGTT), 4428–4447 (ATTT…PGTT), 4458–4527 (TVTV…AIPS), and 4541–4750 (TTPT…ATSF). N4804, N4960, N5017, N5024, N5046, N5096, and N5111 each carry an N-linked (GlcNAc...) asparagine glycan. The VWFD 4 domain maps to 5073-5261 (CICSMWGGSH…VPDSRKDGCW (189 aa)). 3 disulfides stabilise this stretch: C5075–C5221, C5097–C5260, and C5121–C5132. N-linked (GlcNAc...) asparagine glycosylation occurs at N5215. Residues 5412 to 5484 (CPCVGPDGFP…NPCCPETVCV (73 aa)) form the VWFC 2 domain. N-linked (GlcNAc...) asparagine glycosylation is found at N5486, N5526, N5565, N5566, N5602, N5612, N5663, N5677, and N5721. The VWFC 3 domain occupies 5521–5587 (QLCSYNGTFY…VAGQCCGECV (67 aa)). 4 cysteine pairs are disulfide-bonded: C5653–C5705, C5672–C5719, C5681–C5735, and C5685–C5737. Positions 5653–5742 (CEEDSCQVRI…DECGCTPFCV (90 aa)) constitute a CTCK domain.

Homomultimer; disulfide-linked. The N- and C-terminus mediate their assembly into higher order structures to form filaments. The CTCK domains of two polypeptides associate in the endoplasmic reticulum to generate intermolecularly disulfide-bonded dimers. These dimers progress to the Golgi apparatus, which is a more acidic environment than the endoplasmic reticulum. Under acidic conditions, the N-termini form non-covalent intermolecular interactions that juxtapose assemblies from different CTCK-linked dimers to produce long, disulfide-linked polymers that remain highly compact until secretion. In terms of processing, highly glycosylated. C-, N- and O-glycosylated. C-mannosylated in the Cys-rich subdomains probably on the first Trp residue of the WXXW motif. Highly O-glycosylated in the Ser/Thr-rich tandem repeat (TR) region. The repeat region is about 59% O-glycosylated with a high abundance of NeuAc(2)Hex(1)HexNac1-ol. Expressed on surface airway epithelia. Expressed mainly in mucous cells of submucosal glands of airway tissues. Highly expressed in the sublingual gland. Also found in submaxillary glands, endocervix, gall bladder, and pancreas.

It is found in the secreted. Gel-forming mucin that is thought to contribute to the lubricating and viscoelastic properties of whole saliva and cervical mucus. The polypeptide is Mucin-5B (MUC5B) (Homo sapiens (Human)).